The primary structure comprises 96 residues: uncharacterized protein (96 aa).

Residues 1 to 18 (MSNVDRYDVHRDGIEKDR) are compositionally biased toward basic and acidic residues. The tract at residues 1–96 (MSNVDRYDVH…REQHHQPQKQ (96 aa)) is disordered. Residues 28-46 (QNGQSQSTMDNRPPWNNDT) show a composition bias toward polar residues. The span at 70–96 (TIDRQQEELTKNWTESLREQHHQPQKQ) shows a compositional bias: basic and acidic residues.

This is an uncharacterized protein from Caenorhabditis elegans.